A 427-amino-acid polypeptide reads, in one-letter code: Serine--tRNA ligase (427 aa).

Residue 231–233 (TAE) participates in L-serine binding. 262 to 264 (RSE) contributes to the ATP binding site. Residue Glu-285 coordinates L-serine. 349 to 352 (EISS) provides a ligand contact to ATP. L-serine is bound at residue Ser-385.

It belongs to the class-II aminoacyl-tRNA synthetase family. Type-1 seryl-tRNA synthetase subfamily. Homodimer. The tRNA molecule binds across the dimer.

The protein resides in the cytoplasm. It catalyses the reaction tRNA(Ser) + L-serine + ATP = L-seryl-tRNA(Ser) + AMP + diphosphate + H(+). The enzyme catalyses tRNA(Sec) + L-serine + ATP = L-seryl-tRNA(Sec) + AMP + diphosphate + H(+). It functions in the pathway aminoacyl-tRNA biosynthesis; selenocysteinyl-tRNA(Sec) biosynthesis; L-seryl-tRNA(Sec) from L-serine and tRNA(Sec): step 1/1. In terms of biological role, catalyzes the attachment of serine to tRNA(Ser). Is also able to aminoacylate tRNA(Sec) with serine, to form the misacylated tRNA L-seryl-tRNA(Sec), which will be further converted into selenocysteinyl-tRNA(Sec). This chain is Serine--tRNA ligase, found in Rhizobium etli (strain CIAT 652).